Consider the following 147-residue polypeptide: Hemoglobin subunit beta (147 aa).

The region spanning 2-147 (ELTEAQRGAI…VVSALGKQYH (146 aa)) is the Globin domain. Positions 63 and 92 each coordinate heme b.

Belongs to the globin family. Heterotetramer of two alpha chains and two beta chains. As to expression, red blood cells.

Its function is as follows. Involved in oxygen transport from gills to the various peripheral tissues. This chain is Hemoglobin subunit beta (hbb), found in Electrophorus electricus (Electric eel).